Reading from the N-terminus, the 1499-residue chain is MQKREVFGFRKSKVAKTLCGAVLGAALIAIADQQVLADEVTETNSTANVAVTTTGNPATNLPEAQGEATEAASQSQAQAGSKDGALPVEVSADDLNKAVTDAKAAGVNVVQDQTSDKGTATTAAENAQKQAEIKSDYAKQAEEIKKTTEAYKKEVEAHQAETDKINAENKAAEDKYQEDLKAHQAEVEKINTANATAKAEYEAKLAQYQKDLAAVQKANEDSQLDYQNKLSAYQAELARVQKANAEAKEAYEKAVKENTAKNAALQAENEAIKQRNETAKANYDAAMKQYEADLAAIKKAKEDNDADYQAKLAAYQAELARVQKANADAKAAYEKAVEENTAKNTAIQAENEAIKQRNETAKATYEAAVKQYEADLAAVKQANATNEADYQAKLAAYQTELARVQKANADAKATYEKAVEDNKAKNAALQAENEEIKQRNAAAKTDYEAKLAKYEADLAKYKKDFAAYTAALAEAESKKKQDGYLSEPRSQSLNFKSEPNAIRTIDSSVHQYGQQELDALVKSWGISPTNPDRKKSTAYSYFNAINSNNTYAKLVLEKDKPVDVTYTGLKNSSFNGKKISKVVYTYTLKETGFNDGTKMTMFASSDPTVTAWYNDYFTSTNINVKVKFYDEEGQLMNLTGGLVNFSSLNRGNGSGAIDKDAIESVRNFNGRYIPISGSSIKIHENNSAYADSSNAEKSRGARWDTSEWDTTSSPNNWYGAIVGEITQSEISFNMASSKSGNIWFAFNSNINAIGVPTKPVAPTAPTQPMYETEKPLEPAPVVPTYENEPTPPVKTPDQPEPSKPEEPTYETEKPLEPAPVAPTYENEPTPPVKIPDQPEPSKPEEPTYETEKPLEPAPVAPTYENEPTPPVKTPDQPEPSKPEEPTYDPLPTPPLAPTPKQLPTPPVVPTVHFHYSSLLAQPQINKEIKNEDGVDIDRTLVAKQSIVKFELKTEALTAGRPKTTSFVLVDPLPTGYKFDLDATKAASTGFDTTYDEASHTVTFKATDETLATYNADLTKPVETLHPTVVGRVLNDGATYTNNFTLTVNDAYGIKSNVVRVTTPGKPNDPDNPNNNYIKPTKVNKNKEGLNIDGKEVLAGSTNYYELTWDLDQYKGDKSSKEAIQNGFYYVDDYPEEALDVRPDLVKVADEKGNQVSGVSVQQYDSLEAAPKKVQDLLKKANITVKGAFQLFSADNPEEFYKQYVSTGTSLVITDPMTVKSEFGKTGGKYENKAYQIDFGNGYATEVVVNNVPKITPKKDVTVSLDPTSENLDGQTVQLYQTFNYRLIGGLIPQNHSEELEDYSFVDDYDQAGDQYTGNYKTFSSLNLTMKDGSVIKAGTDLTSQTTAETDATNGIVTVRFKEDFLQKISLDSPFQAETYLQMRRIAIGTFENTYVNTVNKVAYASNTVRTTTPIPRTPDKPTPIPTPKPKDPDKPETPKEPKVPSPKVEDPSAPIPVSVGKELTTLPKTGTNDATYMPYLGLAALVGFLGLGLAKRKED.

Residues 1–37 form the signal peptide; sequence MQKREVFGFRKSKVAKTLCGAVLGAALIAIADQQVLA. A disordered region spans residues 50–84; sequence AVTTTGNPATNLPEAQGEATEAASQSQAQAGSKDG. 4 Ag I/II A repeats span residues 145–219, 220–301, 302–383, and 384–465; these read KKTT…QKAN, EDSQ…KKAK, EDND…KQAN, and ATNE…KKDF. 3 disordered regions span residues 689–709, 763–907, and 1409–1472; these read YADS…SEWD, TAPT…TPPV, and RTTT…TGTN. Residues 694–705 show a composition bias toward basic and acidic residues; it reads NAEKSRGARWDT. The span at 789–799 shows a compositional bias: pro residues; the sequence is PTPPVKTPDQP. Over residues 800-815 the composition is skewed to basic and acidic residues; the sequence is EPSKPEEPTYETEKPL. The span at 828–838 shows a compositional bias: pro residues; that stretch reads PTPPVKIPDQP. Positions 839–854 are enriched in basic and acidic residues; sequence EPSKPEEPTYETEKPL. Composition is skewed to pro residues over residues 867–877 and 888–907; these read PTPPVKTPDQP and DPLP…TPPV. Positions 1428 to 1450 are enriched in basic and acidic residues; that stretch reads KPKDPDKPETPKEPKVPSPKVED. Positions 1466-1470 match the LPXTG sorting signal motif; the sequence is LPKTG. T1469 carries the pentaglycyl murein peptidoglycan amidated threonine modification. The propeptide at 1470–1499 is removed by sortase; sequence GTNDATYMPYLGLAALVGFLGLGLAKRKED.

This sequence belongs to the antigen I/II family.

The protein localises to the secreted. It localises to the cell wall. It is found in the cell surface. Functionally, adhesin that mediates binding of bacteria to a variety of host cells. Plays a role in the bacterial invasion of dentinal tubules. A host immunostimulatory component, it modulates the innate immunity response. Plays a protective role against some antibiotics and cationic antimicrobial peptides (histatin-5, HTN3, but not beta-defensin 4A, DEFB4A). The polypeptide is Streptococcal surface protein B (Streptococcus gordonii (strain Challis / ATCC 35105 / BCRC 15272 / CH1 / DL1 / V288)).